Here is a 253-residue protein sequence, read N- to C-terminus: 5-oxoprolinase subunit A (253 aa).

It belongs to the LamB/PxpA family. In terms of assembly, forms a complex composed of PxpA, PxpB and PxpC.

It carries out the reaction 5-oxo-L-proline + ATP + 2 H2O = L-glutamate + ADP + phosphate + H(+). In terms of biological role, catalyzes the cleavage of 5-oxoproline to form L-glutamate coupled to the hydrolysis of ATP to ADP and inorganic phosphate. This Bacillus licheniformis (strain ATCC 14580 / DSM 13 / JCM 2505 / CCUG 7422 / NBRC 12200 / NCIMB 9375 / NCTC 10341 / NRRL NRS-1264 / Gibson 46) protein is 5-oxoprolinase subunit A.